The chain runs to 342 residues: Succinylglutamate desuccinylase (342 aa).

Positions 62, 65, and 158 each coordinate Zn(2+). Residue E222 is part of the active site.

It belongs to the AspA/AstE family. Succinylglutamate desuccinylase subfamily. It depends on Zn(2+) as a cofactor.

It carries out the reaction N-succinyl-L-glutamate + H2O = L-glutamate + succinate. It participates in amino-acid degradation; L-arginine degradation via AST pathway; L-glutamate and succinate from L-arginine: step 5/5. Transforms N(2)-succinylglutamate into succinate and glutamate. The polypeptide is Succinylglutamate desuccinylase (Shewanella frigidimarina (strain NCIMB 400)).